Reading from the N-terminus, the 186-residue chain is Peptide deformylase (186 aa).

2 residues coordinate Fe cation: Cys113 and His156. Residue Glu157 is part of the active site. Fe cation is bound at residue His160.

The protein belongs to the polypeptide deformylase family. Requires Fe(2+) as cofactor.

The catalysed reaction is N-terminal N-formyl-L-methionyl-[peptide] + H2O = N-terminal L-methionyl-[peptide] + formate. Functionally, removes the formyl group from the N-terminal Met of newly synthesized proteins. Requires at least a dipeptide for an efficient rate of reaction. N-terminal L-methionine is a prerequisite for activity but the enzyme has broad specificity at other positions. The sequence is that of Peptide deformylase from Limosilactobacillus reuteri (strain DSM 20016) (Lactobacillus reuteri).